Here is a 1026-residue protein sequence, read N- to C-terminus: Multidrug resistance protein MdtC (1026 aa).

11 helical membrane passes run Ile15–Ala35, Glu333–Leu353, Leu360–Cys380, Leu387–Leu407, Val431–Leu451, Phe463–Pro483, Leu528–Pro548, Leu853–Ser873, Leu897–Val917, Pro953–Gly973, and Ile984–Val1004.

It belongs to the resistance-nodulation-cell division (RND) (TC 2.A.6) family. MdtC subfamily. As to quaternary structure, part of a tripartite efflux system composed of MdtA, MdtB and MdtC. MdtC forms a heteromultimer with MdtB.

Its subcellular location is the cell inner membrane. The chain is Multidrug resistance protein MdtC from Salmonella arizonae (strain ATCC BAA-731 / CDC346-86 / RSK2980).